The chain runs to 227 residues: Ubiquitin domain-containing protein 1 (227 aa).

The disordered stretch occupies residues 1–35 (MGNCVGRQRRERPAAPGHPRKRAGRNEPLKKERLK). Residues 24 to 35 (GRNEPLKKERLK) show a composition bias toward basic and acidic residues. In terms of domain architecture, Ubiquitin-like spans 149-224 (FPLKVRLSTG…IQVIINQPPP (76 aa)).

Interacts with UBTD1.

May be involved in the regulation of cellular senescence through a positive feedback loop with TP53. Is a TP53 downstream target gene that increases the stability of TP53 protein by promoting the ubiquitination and degradation of MDM2. In Rattus norvegicus (Rat), this protein is Ubiquitin domain-containing protein 1 (Ubtd1).